We begin with the raw amino-acid sequence, 248 residues long: Ubiquinone biosynthesis O-methyltransferase (248 aa).

Arg41, Gly72, Asp93, and Met136 together coordinate S-adenosyl-L-methionine.

This sequence belongs to the methyltransferase superfamily. UbiG/COQ3 family.

It catalyses the reaction a 3-demethylubiquinol + S-adenosyl-L-methionine = a ubiquinol + S-adenosyl-L-homocysteine + H(+). The catalysed reaction is a 3-(all-trans-polyprenyl)benzene-1,2-diol + S-adenosyl-L-methionine = a 2-methoxy-6-(all-trans-polyprenyl)phenol + S-adenosyl-L-homocysteine + H(+). It functions in the pathway cofactor biosynthesis; ubiquinone biosynthesis. Functionally, O-methyltransferase that catalyzes the 2 O-methylation steps in the ubiquinone biosynthetic pathway. The protein is Ubiquinone biosynthesis O-methyltransferase of Sinorhizobium medicae (strain WSM419) (Ensifer medicae).